The primary structure comprises 207 residues: Large ribosomal subunit protein uL4 (207 aa).

Positions 52–77 are disordered; it reads RGWADVSGGGRKPWRQKGTGRARAGS.

The protein belongs to the universal ribosomal protein uL4 family. Part of the 50S ribosomal subunit.

Functionally, one of the primary rRNA binding proteins, this protein initially binds near the 5'-end of the 23S rRNA. It is important during the early stages of 50S assembly. It makes multiple contacts with different domains of the 23S rRNA in the assembled 50S subunit and ribosome. Forms part of the polypeptide exit tunnel. In Moorella thermoacetica (strain ATCC 39073 / JCM 9320), this protein is Large ribosomal subunit protein uL4.